We begin with the raw amino-acid sequence, 316 residues long: MSNAFRTVFPTVNRELLNWFPGHMGKGMKQMQQKLKQVDCVIEVHDARIPLSGRNSEFRYTISGVKPHILVLNKKDKIDRRLQGRVVDRLQQEDSEARHILFTNCKDQSCNGIRKVMPLAQDLILSSNRFNRADQKEYCIMIIGVPNVGKSSLINVLRNRHLNKKGASQVGAVAGITRSVLNKIKISEDPLVYLLDTPGILKPNIADTETGLRLALVSCLQDHLVGEELIADYLLYLLNKRGNFKYVELMGLKEPTDSIAEVLIAGSKHLDKTVRVRHYDGSFVIRPDAMLAARHMIKAFRTGAFGKILIDDDKFV.

Residues 28–203 (MKQMQQKLKQ…LLDTPGILKP (176 aa)) enclose the CP-type G domain. GTP contacts are provided by residues 73–76 (NKKD), 147–152 (NVGKSS), and Gly199.

This sequence belongs to the TRAFAC class YlqF/YawG GTPase family. MTG1 subfamily.

It localises to the mitochondrion inner membrane. Plays a role in the regulation of the mitochondrial ribosome assembly and of translational activity. Displays mitochondrial GTPase activity. This is Mitochondrial GTPase 1 from Aedes aegypti (Yellowfever mosquito).